Consider the following 148-residue polypeptide: Lipoprotein signal peptidase (148 aa).

2 helical membrane-spanning segments follow: residues 57–77 and 80–100; these read QWIF…YLNT and VHIF…GNLI. Catalysis depends on residues Asp110 and Asp126. The helical transmembrane segment at 124-144 threads the bilayer; the sequence is IADVFVVVGTVFLCIYVLFFE.

The protein belongs to the peptidase A8 family.

It is found in the cell membrane. The enzyme catalyses Release of signal peptides from bacterial membrane prolipoproteins. Hydrolyzes -Xaa-Yaa-Zaa-|-(S,diacylglyceryl)Cys-, in which Xaa is hydrophobic (preferably Leu), and Yaa (Ala or Ser) and Zaa (Gly or Ala) have small, neutral side chains.. The protein operates within protein modification; lipoprotein biosynthesis (signal peptide cleavage). Its function is as follows. This protein specifically catalyzes the removal of signal peptides from prolipoproteins. The polypeptide is Lipoprotein signal peptidase (Clostridioides difficile (strain 630) (Peptoclostridium difficile)).